Consider the following 439-residue polypeptide: Protease Do-like 1, chloroplastic (439 aa).

The interval glutamine 154–valine 323 is serine protease. Catalysis depends on charge relay system residues histidine 173, aspartate 203, and serine 282. A PDZ domain is found at leucine 326–aspartate 423.

It belongs to the peptidase S1C family. Interacts with PTAC16 and other potential targets for degradation under high light conditions.

The protein resides in the plastid. Its subcellular location is the chloroplast thylakoid membrane. Inhibited by phenylmethylsulfonyl fluoride and O-phenanthroline. Functionally, serine protease that is required at high temperature. May be involved in the degradation of damaged proteins. In vivo, can degrade beta-casein. The sequence is that of Protease Do-like 1, chloroplastic (DEGP1) from Arabidopsis thaliana (Mouse-ear cress).